The sequence spans 156 residues: Crossover junction endodeoxyribonuclease RuvC (156 aa).

Residues Asp7, Glu66, and Asp138 contribute to the active site. Asp7, Glu66, and Asp138 together coordinate Mg(2+).

This sequence belongs to the RuvC family. As to quaternary structure, homodimer which binds Holliday junction (HJ) DNA. The HJ becomes 2-fold symmetrical on binding to RuvC with unstacked arms; it has a different conformation from HJ DNA in complex with RuvA. In the full resolvosome a probable DNA-RuvA(4)-RuvB(12)-RuvC(2) complex forms which resolves the HJ. It depends on Mg(2+) as a cofactor.

It is found in the cytoplasm. The enzyme catalyses Endonucleolytic cleavage at a junction such as a reciprocal single-stranded crossover between two homologous DNA duplexes (Holliday junction).. Functionally, the RuvA-RuvB-RuvC complex processes Holliday junction (HJ) DNA during genetic recombination and DNA repair. Endonuclease that resolves HJ intermediates. Cleaves cruciform DNA by making single-stranded nicks across the HJ at symmetrical positions within the homologous arms, yielding a 5'-phosphate and a 3'-hydroxyl group; requires a central core of homology in the junction. The consensus cleavage sequence is 5'-(A/T)TT(C/G)-3'. Cleavage occurs on the 3'-side of the TT dinucleotide at the point of strand exchange. HJ branch migration catalyzed by RuvA-RuvB allows RuvC to scan DNA until it finds its consensus sequence, where it cleaves and resolves the cruciform DNA. The polypeptide is Crossover junction endodeoxyribonuclease RuvC (Ehrlichia canis (strain Jake)).